The primary structure comprises 408 residues: Histone acetyltransferase type B subunit 2 (408 aa).

5 WD repeats span residues 120-160 (KHEQ…KDHG), 167-207 (YHKE…NKSP), 213-253 (VHTD…AIQK), 255-295 (SVSS…KPLH), and 299-339 (GHED…AEQQ). Residues 341–345 (DDAYD) form an interaction with the histone H4 N-terminus region. One copy of the WD 6 repeat lies at 356 to 396 (GHRSPVNEFSHNSNVPWLMCSVEEENVLQIWKPANKIVRPP).

Belongs to the WD repeat RBAP46/RBAP48/MSI1 family. As to quaternary structure, component of the HAT-B complex composed of at least HAT1 and HAT2. The HAT-B complex binds to histone H4 tail.

The protein resides in the cytoplasm. It is found in the nucleus. In terms of biological role, regulatory subunit of the histone acetylase B (HAT-B) complex. The complex acetylates 'Lys-12' of histone H4 which is required for telomeric silencing. In Kluyveromyces lactis (strain ATCC 8585 / CBS 2359 / DSM 70799 / NBRC 1267 / NRRL Y-1140 / WM37) (Yeast), this protein is Histone acetyltransferase type B subunit 2 (HAT2).